A 547-amino-acid chain; its full sequence is Glucocorticoid-induced transcript 1 protein (547 aa).

The span at 1–13 (MSTASSSSSSSSS) shows a compositional bias: low complexity. Disordered stretches follow at residues 1-55 (MSTA…APAA) and 72-285 (LLRG…LSNI). Serine 20 is modified (phosphoserine). Over residues 26–38 (SAAGSPPAVAAAG) the composition is skewed to low complexity. Over residues 39 to 50 (SGNGAGGGGGVG) the composition is skewed to gly residues. Phosphoserine is present on residues serine 79, serine 105, serine 107, and serine 108. The span at 86-105 (AAAAASLGSLPGPGAARGPS) shows a compositional bias: low complexity. Position 110 is a phosphothreonine (threonine 110). Basic and acidic residues predominate over residues 130–145 (RSPESHRRSSSPERRS). The segment covering 162-177 (RTSSTIRRTSSLDTIT) has biased composition (low complexity). 2 positions are modified to phosphoserine: serine 171 and serine 172. Threonine 175 and threonine 177 each carry phosphothreonine. Residues 187 to 201 (RDPHVHYPSCMKDKA) are compositionally biased toward basic and acidic residues. Position 223 is a phosphoserine (serine 223). Residues 225 to 254 (GSADQLKEQIAKLRQQLQRSKQSSRHSKEK) are a coiled coil. Residues 236 to 245 (KLRQQLQRSK) are compositionally biased toward low complexity. At serine 258 the chain carries Phosphoserine. Positions 265-276 (ITISHTQATGSR) are enriched in polar residues. The residue at position 266 (threonine 266) is a Phosphothreonine. Phosphoserine is present on serine 303. Basic and acidic residues predominate over residues 319-331 (EVSKPLDIPDGRR). Residues 319–417 (EVSKPLDIPD…KPNNSYMFKR (99 aa)) are disordered. Residues 339–356 (RSSSTRSIDTQTPSVQER) show a composition bias toward polar residues. A Phosphothreonine modification is found at threonine 343. Serine 345 is subject to Phosphoserine. Position 350 is a phosphothreonine (threonine 350). The segment covering 357 to 369 (SSSCSSHSPCVSP) has biased composition (low complexity). Phosphoserine occurs at positions 394, 398, 406, 412, and 480. Residues 505-520 (SLSDDTSTAGSMEASV) are compositionally biased toward polar residues. A disordered region spans residues 505 to 530 (SLSDDTSTAGSMEASVQQPSQQQQLL). Residues 521–530 (QQPSQQQQLL) are compositionally biased toward low complexity.

In terms of tissue distribution, predominantly expressed in lung, spleen, thymus and testis and, at lower levels, in brain, bone marrow, peripheral leukocytes, skin and trachea.

In Homo sapiens (Human), this protein is Glucocorticoid-induced transcript 1 protein (GLCCI1).